We begin with the raw amino-acid sequence, 311 residues long: Mediator of RNA polymerase II transcription subunit 27 (311 aa).

This sequence belongs to the Mediator complex subunit 27 family. In terms of assembly, component of the Mediator complex.

It is found in the nucleus. Its function is as follows. Component of the Mediator complex, a coactivator involved in the regulated transcription of nearly all RNA polymerase II-dependent genes. Mediator functions as a bridge to convey information from gene-specific regulatory proteins to the basal RNA polymerase II transcription machinery. Mediator is recruited to promoters by direct interactions with regulatory proteins and serves as a scaffold for the assembly of a functional preinitiation complex with RNA polymerase II and the general transcription factors. This is Mediator of RNA polymerase II transcription subunit 27 (med27) from Xenopus tropicalis (Western clawed frog).